The sequence spans 124 residues: Small ribosomal subunit protein uS13 (124 aa).

A disordered region spans residues 94-124 (KGLPVRGQRTKTNARTRKGPKRTVAGKKKAR).

This sequence belongs to the universal ribosomal protein uS13 family. As to quaternary structure, part of the 30S ribosomal subunit. Forms a loose heterodimer with protein S19. Forms two bridges to the 50S subunit in the 70S ribosome.

In terms of biological role, located at the top of the head of the 30S subunit, it contacts several helices of the 16S rRNA. In the 70S ribosome it contacts the 23S rRNA (bridge B1a) and protein L5 of the 50S subunit (bridge B1b), connecting the 2 subunits; these bridges are implicated in subunit movement. Contacts the tRNAs in the A and P-sites. In Pseudarthrobacter chlorophenolicus (strain ATCC 700700 / DSM 12829 / CIP 107037 / JCM 12360 / KCTC 9906 / NCIMB 13794 / A6) (Arthrobacter chlorophenolicus), this protein is Small ribosomal subunit protein uS13.